We begin with the raw amino-acid sequence, 563 residues long: Arginine--tRNA ligase (563 aa).

The short motif at P121–H131 is the 'HIGH' region element.

It belongs to the class-I aminoacyl-tRNA synthetase family. Monomer.

Its subcellular location is the cytoplasm. It catalyses the reaction tRNA(Arg) + L-arginine + ATP = L-arginyl-tRNA(Arg) + AMP + diphosphate. The polypeptide is Arginine--tRNA ligase (Streptococcus pneumoniae (strain P1031)).